The primary structure comprises 466 residues: Adenylosuccinate lyase (466 aa).

Residues 21–22 (RY), 97–99 (NHD), and 130–131 (TS) each bind substrate. His-180 functions as the Proton donor/acceptor in the catalytic mechanism. Gln-259 provides a ligand contact to substrate. Ser-307 serves as the catalytic Proton donor/acceptor. Residues Arg-347, Ser-352, and Arg-356 each contribute to the substrate site.

The protein belongs to the lyase 1 family. Adenylosuccinate lyase subfamily. Homotetramer. Residues from neighboring subunits contribute catalytic and substrate-binding residues to each active site.

The catalysed reaction is N(6)-(1,2-dicarboxyethyl)-AMP = fumarate + AMP. It catalyses the reaction (2S)-2-[5-amino-1-(5-phospho-beta-D-ribosyl)imidazole-4-carboxamido]succinate = 5-amino-1-(5-phospho-beta-D-ribosyl)imidazole-4-carboxamide + fumarate. Its pathway is purine metabolism; AMP biosynthesis via de novo pathway; AMP from IMP: step 2/2. The protein operates within purine metabolism; IMP biosynthesis via de novo pathway; 5-amino-1-(5-phospho-D-ribosyl)imidazole-4-carboxamide from 5-amino-1-(5-phospho-D-ribosyl)imidazole-4-carboxylate: step 2/2. In Dictyostelium discoideum (Social amoeba), this protein is Adenylosuccinate lyase (purB).